The sequence spans 143 residues: Deoxyuridine 5'-triphosphate nucleotidohydrolase (143 aa).

Residues 62 to 64 (RSG), asparagine 75, and 79 to 81 (TID) contribute to the substrate site.

This sequence belongs to the dUTPase family. Mg(2+) is required as a cofactor.

It catalyses the reaction dUTP + H2O = dUMP + diphosphate + H(+). The protein operates within pyrimidine metabolism; dUMP biosynthesis; dUMP from dCTP (dUTP route): step 2/2. Its function is as follows. This enzyme is involved in nucleotide metabolism: it produces dUMP, the immediate precursor of thymidine nucleotides and it decreases the intracellular concentration of dUTP so that uracil cannot be incorporated into DNA. This chain is Deoxyuridine 5'-triphosphate nucleotidohydrolase, found in Acaryochloris marina (strain MBIC 11017).